A 107-amino-acid chain; its full sequence is Nucleoid-associated protein A1G_07310 (107 aa).

Belongs to the YbaB/EbfC family. In terms of assembly, homodimer.

The protein resides in the cytoplasm. It localises to the nucleoid. In terms of biological role, binds to DNA and alters its conformation. May be involved in regulation of gene expression, nucleoid organization and DNA protection. This is Nucleoid-associated protein A1G_07310 from Rickettsia rickettsii (strain Sheila Smith).